Consider the following 179-residue polypeptide: Crossover junction endodeoxyribonuclease RuvC (179 aa).

Active-site residues include aspartate 7, glutamate 67, and aspartate 140. Mg(2+) is bound by residues aspartate 7, glutamate 67, and aspartate 140.

This sequence belongs to the RuvC family. Homodimer which binds Holliday junction (HJ) DNA. The HJ becomes 2-fold symmetrical on binding to RuvC with unstacked arms; it has a different conformation from HJ DNA in complex with RuvA. In the full resolvosome a probable DNA-RuvA(4)-RuvB(12)-RuvC(2) complex forms which resolves the HJ. Requires Mg(2+) as cofactor.

It localises to the cytoplasm. It catalyses the reaction Endonucleolytic cleavage at a junction such as a reciprocal single-stranded crossover between two homologous DNA duplexes (Holliday junction).. Functionally, the RuvA-RuvB-RuvC complex processes Holliday junction (HJ) DNA during genetic recombination and DNA repair. Endonuclease that resolves HJ intermediates. Cleaves cruciform DNA by making single-stranded nicks across the HJ at symmetrical positions within the homologous arms, yielding a 5'-phosphate and a 3'-hydroxyl group; requires a central core of homology in the junction. The consensus cleavage sequence is 5'-(A/T)TT(C/G)-3'. Cleavage occurs on the 3'-side of the TT dinucleotide at the point of strand exchange. HJ branch migration catalyzed by RuvA-RuvB allows RuvC to scan DNA until it finds its consensus sequence, where it cleaves and resolves the cruciform DNA. The chain is Crossover junction endodeoxyribonuclease RuvC from Salinibacter ruber (strain DSM 13855 / M31).